The primary structure comprises 973 residues: Vacuolar protein sorting-associated protein 18 homolog (973 aa).

Ala2 carries the N-acetylalanine modification. Phosphoserine is present on residues Ser3, Ser11, and Ser13. An N6-acetyllysine modification is found at Lys362. A coiled-coil region spans residues 454 to 481 (EEIALKFLEARQEEALAEFLQRKLASLK). The stretch at 618-772 (GSRLDARQLI…VVQEEEDVQT (155 aa)) is one CHCR repeat. A Phosphoserine modification is found at Ser689. A coiled-coil region spans residues 802–848 (KEAICSSLKAYNHHIQELQREMEEATASAQRIRRDLQELRGRYGTVE). The RING-type zinc-finger motif lies at 853-947 (CATCDFPLLN…ELVAAECVYC (95 aa)). The disordered stretch occupies residues 903-929 (GAAPPPAKGSARAKEAEGGAATAGPSR). Residue Ser912 is modified to Phosphoserine.

Belongs to the VPS18 family. Core component of at least two putative endosomal tethering complexes, the homotypic fusion and vacuole protein sorting (HOPS) complex and the class C core vacuole/endosome tethering (CORVET) complex. Their common core is composed of the class C Vps proteins VPS11, VPS16, VPS18 and VPS33A, which in HOPS further associates with VPS39 and VPS41 and in CORVET with VPS8 and TGFBRAP1. Interacts with RAB5C. Interacts with HOOK1. Interacts with STX7, MON1B. Associates with adaptor protein complex 3 (AP-3) and clathrin:AP-3 complexes. Interacts with SYNPO2. Interacts with PLEKHM1. As to expression, ubiquitous. Expression was highest in heart and low in lung.

The protein resides in the late endosome membrane. Its subcellular location is the lysosome membrane. It is found in the early endosome. It localises to the cytoplasmic vesicle. The protein localises to the autophagosome. The protein resides in the clathrin-coated vesicle. Its function is as follows. Plays a role in vesicle-mediated protein trafficking to lysosomal compartments including the endocytic membrane transport and autophagic pathways. Believed to act as a core component of the putative HOPS and CORVET endosomal tethering complexes which are proposed to be involved in the Rab5-to-Rab7 endosome conversion probably implicating MON1A/B, and via binding SNAREs and SNARE complexes to mediate tethering and docking events during SNARE-mediated membrane fusion. The HOPS complex is proposed to be recruited to Rab7 on the late endosomal membrane and to regulate late endocytic, phagocytic and autophagic traffic towards lysosomes. The CORVET complex is proposed to function as a Rab5 effector to mediate early endosome fusion probably in specific endosome subpopulations. Required for fusion of endosomes and autophagosomes with lysosomes. Involved in dendrite development of Pukinje cells. This Homo sapiens (Human) protein is Vacuolar protein sorting-associated protein 18 homolog.